The following is a 78-amino-acid chain: uncharacterized protein (78 aa).

Positions 51–78 (GGKWDGGGSGGKWNGGGGSGGGSWKKWN) are disordered.

This is an uncharacterized protein from Dictyostelium discoideum (Social amoeba).